The primary structure comprises 78 residues: Translational regulator CsrA (78 aa).

It belongs to the CsrA/RsmA family. As to quaternary structure, homodimer; the beta-strands of each monomer intercalate to form a hydrophobic core, while the alpha-helices form wings that extend away from the core.

It localises to the cytoplasm. Functionally, a translational regulator that binds mRNA to regulate translation initiation and/or mRNA stability. Usually binds in the 5'-UTR at or near the Shine-Dalgarno sequence preventing ribosome-binding, thus repressing translation. Its main target seems to be the major flagellin gene, while its function is anatagonized by FliW. The protein is Translational regulator CsrA of Desulfotalea psychrophila (strain LSv54 / DSM 12343).